A 145-amino-acid polypeptide reads, in one-letter code: Snaclec salmorin subunit B (145 aa).

The first 23 residues, 1-23 (MGRFIFVSFGLLVVFVSLSGTGA), serve as a signal peptide directing secretion. 3 disulfides stabilise this stretch: C25–C36, C53–C141, and C118–C133. Positions 32–142 (YEGHCYKLFN…CRMEAYFVCE (111 aa)) constitute a C-type lectin domain. Ca(2+) is bound by residues S64 and E70. E142 contributes to the Ca(2+) binding site.

Belongs to the snaclec family. In terms of assembly, heterodimer of subunits A and B; disulfide-linked. As to expression, expressed by the venom gland.

The protein resides in the secreted. In terms of biological role, inhibits thrombin-induced fibrinogen clotting and factor Xa-induced prothrombin activation. Binds to thrombin and prothrombin exosites. In Gloydius brevicauda (Korean slamosa snake), this protein is Snaclec salmorin subunit B.